Consider the following 89-residue polypeptide: Shiga toxin subunit B (89 aa).

The N-terminal stretch at 1 to 20 (MKKTLLIAASLSFFSASALA) is a signal peptide. The cysteines at positions 24 and 77 are disulfide-linked.

Belongs to the stxB family. Shiga toxin contains a single subunit A and five copies of subunit B.

Functionally, the B subunit is responsible for the binding of the holotoxin to specific receptors on the target cell surface, such as globotriaosylceramide (Gb3) in human intestinal microvilli. In Shigella sonnei (Shigella sonnei bacteriophage 7888), this protein is Shiga toxin subunit B (stxB).